A 187-amino-acid polypeptide reads, in one-letter code: Elongation factor P (187 aa).

It belongs to the elongation factor P family.

The protein resides in the cytoplasm. It participates in protein biosynthesis; polypeptide chain elongation. Involved in peptide bond synthesis. Stimulates efficient translation and peptide-bond synthesis on native or reconstituted 70S ribosomes in vitro. Probably functions indirectly by altering the affinity of the ribosome for aminoacyl-tRNA, thus increasing their reactivity as acceptors for peptidyl transferase. This chain is Elongation factor P, found in Ruegeria sp. (strain TM1040) (Silicibacter sp.).